A 172-amino-acid chain; its full sequence is Signal peptidase complex catalytic subunit sec11 (172 aa).

At 1–14 (MLSFLQNPRQAAAQ) the chain is on the cytoplasmic side. The chain crosses the membrane as a helical; Signal-anchor for type II membrane protein span at residues 15 to 35 (VLNFALILSTAFMMWKGLSVA). Residues 36-172 (SDSPSPIVVV…MGLVVVLQRE (137 aa)) lie on the Lumenal side of the membrane. Catalysis depends on charge relay system residues S49, H90, and D115. Positions 158-169 (VMLGMMGLVVVL) are C-terminal short (CTS) helix.

This sequence belongs to the peptidase S26B family. As to quaternary structure, component of the signal peptidase complex (SPC) composed of a catalytic subunit SEC11 and three accessory subunits SPC1, SPC2 and SPC3. The complex induces a local thinning of the ER membrane which is used to measure the length of the signal peptide (SP) h-region of protein substrates. This ensures the selectivity of the complex towards h-regions shorter than 18-20 amino acids. SPC associates with the translocon complex.

The protein resides in the endoplasmic reticulum membrane. The catalysed reaction is Cleavage of hydrophobic, N-terminal signal or leader sequences from secreted and periplasmic proteins.. Functionally, catalytic component of the signal peptidase complex (SPC) which catalyzes the cleavage of N-terminal signal sequences from nascent proteins as they are translocated into the lumen of the endoplasmic reticulum. Specifically cleaves N-terminal signal peptides that contain a hydrophobic alpha-helix (h-region) shorter than 18-20 amino acids. This Sclerotinia sclerotiorum (strain ATCC 18683 / 1980 / Ss-1) (White mold) protein is Signal peptidase complex catalytic subunit sec11 (sec11).